We begin with the raw amino-acid sequence, 216 residues long: Protein-L-isoaspartate O-methyltransferase (216 aa).

Serine 62 is a catalytic residue.

This sequence belongs to the methyltransferase superfamily. L-isoaspartyl/D-aspartyl protein methyltransferase family.

It localises to the cytoplasm. The enzyme catalyses [protein]-L-isoaspartate + S-adenosyl-L-methionine = [protein]-L-isoaspartate alpha-methyl ester + S-adenosyl-L-homocysteine. In terms of biological role, catalyzes the methyl esterification of L-isoaspartyl residues in peptides and proteins that result from spontaneous decomposition of normal L-aspartyl and L-asparaginyl residues. It plays a role in the repair and/or degradation of damaged proteins. The chain is Protein-L-isoaspartate O-methyltransferase from Methanospirillum hungatei JF-1 (strain ATCC 27890 / DSM 864 / NBRC 100397 / JF-1).